We begin with the raw amino-acid sequence, 592 residues long: MRGKTVRRLAVLAAVGLLCHGAWAGTWNIGILAMRGEASTRSHWQPLAKTLSQQLPGETFHIQPLDLHQMQEAVNQGTVQFVITNPAQFVQLNSHAPLRWLASLRSTRDGKAVSNVIGSVILTRRDSGITTAHDLIGKTVGAIDAQAFGGYLLGYKALSDAGLRPERDFHLRFTGFPGDALVYMLREKAVQAAIVPVCLLENMDQEGLINKKDFIALLSRPTPLPCLTSTPLYPDWSFAALPAVSDALADRVTRALFNAPAAASFHWGAPASTSQVEALLRDVRQHPQQRRLWLDVKSWLIQHQLMVGGVILAFLLLTLNYIWVMLLVRRRGKQLERNSVVLHQHERALETARQMSVLGEMTSGFAHELNQPLSAIRHYAQGCLIRLRAADEQHPLLPALEQIDQQAQRGADTLRNLRHWVSQAQGNPVLTEAWKAIAIREAIDHVWQLLRMAQQFPTVTLHTEVSAALRVTLPSVLLEQVLANIILNAAQAGATHLWIVAERTENGISIVLQDNAGGIDEALLRQAFQPFMTTRKEGMGLGLAICQRLVRYGRGDISIRNQTAPDGLSGTVVTIHFLHENGGRDGDNSSTG.

A run of 2 helical transmembrane segments spans residues 11 to 31 and 307 to 327; these read VLAA…NIGI and VGGV…VMLL. One can recognise a Histidine kinase domain in the interval 364-581; that stretch reads GFAHELNQPL…VVTIHFLHEN (218 aa). H367 is subject to Phosphohistidine; by autocatalysis.

In terms of processing, autophosphorylated.

The protein resides in the cell inner membrane. The enzyme catalyses ATP + protein L-histidine = ADP + protein N-phospho-L-histidine.. Functionally, member of the two-component regulatory system TtrR/TtrS, which is required for synthesis of tetrathionate reductase. Probably functions as a sensor protein kinase which is autophosphorylated at a histidine residue in response to tetrathionate, and transfers its phosphate group to TtrR. During mice infection, the ability to use tetrathionate as an electron acceptor is a growth advantage for S.typhimurium over the competing microbiota in the lumen of the inflamed gut. This chain is Tetrathionate sensor histidine kinase TtrS (ttrS), found in Salmonella typhimurium (strain LT2 / SGSC1412 / ATCC 700720).